The chain runs to 512 residues: MGALEAERAANNATALETQSSPEDLGQPSPLRKIISVASIAAGVQFGWALQLSLLTPYIQLLGIPHKWSSYMWLCGPISGMIVQPIVGYHSDRCESRFGRRRPFIAAGVALVAVSVFLIGFAADMGHSFGDKLENKVRTRAIIIFLTGFWFLDVANNTLQGPCRAFLADLAAGDAKKTRVANACFSFFMAVGNVLGYAAGSYTNLHKMFPFTMTKACDIYCANLKTCFFLSITLLLIVTFSSLWYVKDKQWSPPQGDKEEKTSSLFFFGEIFGAVRHMKRPMVMLLIVTVINWIAWFPFILYDTDWMGREVYGGNSDGDERSKKLYDQGVQAGALGLMFNSILLGFVSLGVESIGRKMGGAKRLWGCVNFILAIGLAMTVLVTKSAEHHREIAGPLAGPSSGIKAGVFSLFTVLGIPLAITYSIPFALASIFSTNSGAGQGLSLGVLNIAICIPQMIVSFSSGPLDAQFGGGNLPSFVVGAIAAAVSGVLALTVLPSPPPDAPAMSGAMGFH.

Positions 1-27 are disordered; that stretch reads MGALEAERAANNATALETQSSPEDLGQ. At 1–33 the chain is on the cytoplasmic side; the sequence is MGALEAERAANNATALETQSSPEDLGQPSPLRK. Residues 11 to 22 show a composition bias toward polar residues; sequence NNATALETQSSP. Ser-20 carries the post-translational modification Phosphoserine. Residues 34–54 form a helical membrane-spanning segment; the sequence is IISVASIAAGVQFGWALQLSL. At 55 to 67 the chain is on the extracellular side; the sequence is LTPYIQLLGIPHK. The chain crosses the membrane as a helical span at residues 68–88; the sequence is WSSYMWLCGPISGMIVQPIVG. Residues 89-102 are Cytoplasmic-facing; that stretch reads YHSDRCESRFGRRR. Residues 103–123 traverse the membrane as a helical segment; sequence PFIAAGVALVAVSVFLIGFAA. Residues 124 to 140 lie on the Extracellular side of the membrane; it reads DMGHSFGDKLENKVRTR. The helical transmembrane segment at 141-161 threads the bilayer; it reads AIIIFLTGFWFLDVANNTLQG. The Cytoplasmic portion of the chain corresponds to 162 to 179; it reads PCRAFLADLAAGDAKKTR. The chain crosses the membrane as a helical span at residues 180–200; sequence VANACFSFFMAVGNVLGYAAG. Residues 201-225 are Extracellular-facing; the sequence is SYTNLHKMFPFTMTKACDIYCANLK. Residues 226 to 246 traverse the membrane as a helical segment; it reads TCFFLSITLLLIVTFSSLWYV. Residues 247 to 281 are Cytoplasmic-facing; the sequence is KDKQWSPPQGDKEEKTSSLFFFGEIFGAVRHMKRP. Residues 282–302 traverse the membrane as a helical segment; sequence MVMLLIVTVINWIAWFPFILY. The Extracellular segment spans residues 303–333; it reads DTDWMGREVYGGNSDGDERSKKLYDQGVQAG. The helical transmembrane segment at 334–354 threads the bilayer; that stretch reads ALGLMFNSILLGFVSLGVESI. Topologically, residues 355 to 363 are cytoplasmic; sequence GRKMGGAKR. The chain crosses the membrane as a helical span at residues 364–384; sequence LWGCVNFILAIGLAMTVLVTK. At 385–406 the chain is on the extracellular side; that stretch reads SAEHHREIAGPLAGPSSGIKAG. The helical transmembrane segment at 407 to 427 threads the bilayer; the sequence is VFSLFTVLGIPLAITYSIPFA. Residues 428–440 lie on the Cytoplasmic side of the membrane; sequence LASIFSTNSGAGQ. Residues 441 to 461 traverse the membrane as a helical segment; the sequence is GLSLGVLNIAICIPQMIVSFS. At 462 to 473 the chain is on the extracellular side; that stretch reads SGPLDAQFGGGN. The chain crosses the membrane as a helical span at residues 474–494; that stretch reads LPSFVVGAIAAAVSGVLALTV. Residues 495 to 512 lie on the Cytoplasmic side of the membrane; sequence LPSPPPDAPAMSGAMGFH.

It belongs to the glycoside-pentoside-hexuronide (GPH) cation symporter transporter (TC 2.A.2.4) family. As to expression, widely expressed. Expressed in the endosperm and on the epidermis of the outer surface of the cotyledons of torpedo-stage or older embryos.

It localises to the cell membrane. It carries out the reaction sucrose(out) + H(+)(out) = sucrose(in) + H(+)(in). It functions in the pathway glycan biosynthesis; sucrose metabolism. With respect to regulation, inhibited by protonophores (e.g. carbonyl cyanide m-chlorophenyl-hydrazone (CCCP)) and SH group inhibitors (e.g. p-chloromercuribenzene sulphonic acid (PCMBS)). Functionally, responsible in a heterologous system for the transport of sucrose into the cell, with the concomitant uptake of protons (symport system). Can also transport biotin, and probably maltose at a lesser rate. In planta, the role of SUC5 for the transport of sucrose seems to be negligible. Plays a role in the nutrition of the filial tissues during early seed development and is probably involved in the import of biotin into the endosperm and the embryo epidermis. The chain is Sucrose transport protein SUC5 from Arabidopsis thaliana (Mouse-ear cress).